The chain runs to 839 residues: Probable beta-glucosidase I (839 aa).

N-linked (GlcNAc...) asparagine glycosylation is present at N197. The active site involves D225. In terms of domain architecture, PA14 spans D396–V556. N494 carries an N-linked (GlcNAc...) asparagine glycan.

It belongs to the glycosyl hydrolase 3 family.

It localises to the secreted. It carries out the reaction Hydrolysis of terminal, non-reducing beta-D-glucosyl residues with release of beta-D-glucose.. It functions in the pathway glycan metabolism; cellulose degradation. In terms of biological role, beta-glucosidases are one of a number of cellulolytic enzymes, and catalyze the last step releasing glucose from the inhibitory cellobiose. The chain is Probable beta-glucosidase I (bglI) from Emericella nidulans (strain FGSC A4 / ATCC 38163 / CBS 112.46 / NRRL 194 / M139) (Aspergillus nidulans).